A 234-amino-acid chain; its full sequence is Large ribosomal subunit protein eL6 (234 aa).

This sequence belongs to the eukaryotic ribosomal protein eL6 family.

This is Large ribosomal subunit protein eL6 (RPL6) from Mesembryanthemum crystallinum (Common ice plant).